The chain runs to 273 residues: Outer surface protein A (273 aa).

Positions 1–16 are cleaved as a signal peptide; that stretch reads MKKYLLGIGLILALIA. Residue Cys17 is the site of N-palmitoyl cysteine attachment. The S-diacylglycerol cysteine moiety is linked to residue Cys17.

It belongs to the OspA lipoprotein family.

The protein resides in the cell outer membrane. It is found in the cell surface. The chain is Outer surface protein A from Borreliella burgdorferi (Lyme disease spirochete).